The following is a 123-amino-acid chain: WAP four-disulfide core domain protein 5 (123 aa).

Positions 1-24 (MRIQSLLLLGVLLAVGSQLPAAFG) are cleaved as a signal peptide. 2 WAP domains span residues 27 to 73 (KGEK…CVPR) and 74 to 121 (ISVK…RDPA). Intrachain disulfides connect C34-C62, C41-C66, C49-C61, C55-C70, C81-C109, C88-C113, C96-C108, and C102-C117.

It localises to the secreted. In terms of biological role, putative acid-stable proteinase inhibitor. The sequence is that of WAP four-disulfide core domain protein 5 (WFDC5) from Callithrix jacchus (White-tufted-ear marmoset).